Here is a 325-residue protein sequence, read N- to C-terminus: Diacylglycerol acyltransferase/mycolyltransferase Ag85B (325 aa).

A signal peptide spans 1-40 (MTDVSRKIRAWGRRLMIGTAAAVVLPGLVGLAGGAATAGA). 82–83 (LR) provides a ligand contact to substrate. The fibronectin-binding stretch occupies residues 98 to 108 (FEWYYQSGLSI). Cysteines 127 and 132 form a disulfide. Ser-166 and Asp-194 together coordinate substrate. Residue Ser-166 is the Nucleophile of the active site. Glu-270 is a catalytic residue. Residues 272–275 (FVRS), Lys-279, and 302–304 (HSW) contribute to the substrate site. The active site involves His-302.

The protein belongs to the mycobacterial A85 antigen family.

Its subcellular location is the secreted. The enzyme catalyses 2 alpha,alpha'-trehalose 6-mycolate = alpha,alpha'-trehalose 6,6'-bismycolate + alpha,alpha-trehalose. It catalyses the reaction an acyl-CoA + a 1,2-diacyl-sn-glycerol = a triacyl-sn-glycerol + CoA. Functionally, the antigen 85 proteins (FbpA, FbpB, FbpC) are responsible for the high affinity of mycobacteria for fibronectin, a large adhesive glycoprotein, which facilitates the attachment of M.tuberculosis to murine alveolar macrophages (AMs). They also help to maintain the integrity of the cell wall by catalyzing the transfer of mycolic acids to cell wall arabinogalactan and through the synthesis of alpha,alpha-trehalose dimycolate (TDM, cord factor). They catalyze the transfer of a mycoloyl residue from one molecule of alpha,alpha-trehalose monomycolate (TMM) to another TMM, leading to the formation of TDM. The sequence is that of Diacylglycerol acyltransferase/mycolyltransferase Ag85B (fbpB) from Mycobacterium tuberculosis (strain ATCC 25177 / H37Ra).